A 359-amino-acid chain; its full sequence is Innexin inx2 (359 aa).

Residues 1–22 (MFDVFGSVKGLLKLDSVCIDNN) lie on the Cytoplasmic side of the membrane. The chain crosses the membrane as a helical span at residues 23-43 (LFRLHYKATVIILIAFSLLVT). Over 44 to 109 (SRQYIGDPID…KDEVKYHKYY (66 aa)) the chain is Extracellular. A helical transmembrane segment spans residues 110 to 130 (QWVCFVLFFQAILFYIPRYLW). At 131 to 180 (KTWEGGRIKMLVLDLNSPVVNEQSKADRKKLLVDYFATNLHTQNFYAYRF) the chain is on the cytoplasmic side. The chain crosses the membrane as a helical span at residues 181–201 (FICEALNFVNVVGQIYFMDLF). Residues 202-266 (LDGEFTTYGS…VLPLNIVNEK (65 aa)) lie on the Extracellular side of the membrane. Residues 267–287 (IYVFLWFWFVILSVLTGIGLV) form a helical membrane-spanning segment. Residues 288 to 359 (YRLATAMGPQ…AKKLEGKEIV (72 aa)) are Cytoplasmic-facing.

The protein belongs to the pannexin family. In terms of tissue distribution, widespread expression in embryo, in anterior and posterior row of neural precursors, midline precursors and in epithelial sheet of stomodeum.

Its subcellular location is the cell membrane. The protein localises to the cell junction. It is found in the gap junction. In terms of biological role, structural components of the gap junctions. The polypeptide is Innexin inx2 (inx2) (Schistocerca americana (American grasshopper)).